The chain runs to 216 residues: Glycerol-3-phosphate acyltransferase (216 aa).

The next 5 membrane-spanning stretches (helical) occupy residues 4-24 (TIIGLILAYLLGSIPTGLWIG), 71-91 (LPFFLHIEGVSPLVFGLLAVI), 113-133 (VVLGFSPAFFVYLIVIFASIL), 144-164 (VLSAVIAILSALLFPLVGFIL), and 165-185 (PSYDLFFTLIIIALALIIILR).

It belongs to the PlsY family. Probably interacts with PlsX.

It is found in the cell membrane. The enzyme catalyses an acyl phosphate + sn-glycerol 3-phosphate = a 1-acyl-sn-glycero-3-phosphate + phosphate. Its pathway is lipid metabolism; phospholipid metabolism. Catalyzes the transfer of an acyl group from acyl-phosphate (acyl-PO(4)) to glycerol-3-phosphate (G3P) to form lysophosphatidic acid (LPA). This enzyme utilizes acyl-phosphate as fatty acyl donor, but not acyl-CoA or acyl-ACP. The chain is Glycerol-3-phosphate acyltransferase from Streptococcus sanguinis (strain SK36).